The following is a 121-amino-acid chain: Large ribosomal subunit protein bL19 (121 aa).

It belongs to the bacterial ribosomal protein bL19 family.

In terms of biological role, this protein is located at the 30S-50S ribosomal subunit interface and may play a role in the structure and function of the aminoacyl-tRNA binding site. The polypeptide is Large ribosomal subunit protein bL19 (Polaromonas sp. (strain JS666 / ATCC BAA-500)).